Consider the following 45-residue polypeptide: EQCGRQAGGKLCPNNLCCSQYGWCGSSDDYCSPSKNCQSNCKGGG.

In terms of domain architecture, Chitin-binding type-1 spans 1–43 (EQCGRQAGGKLCPNNLCCSQYGWCGSSDDYCSPSKNCQSNCKG). Intrachain disulfides connect cysteine 3-cysteine 18, cysteine 12-cysteine 24, cysteine 17-cysteine 31, and cysteine 37-cysteine 41.

Its function is as follows. N-acetyl-D-glucosamine / N-acetyl-D-neuraminic acid binding lectin. Can inhibit fungal growth. This is Pseudo-hevein from Hevea brasiliensis (Para rubber tree).